The following is an 86-amino-acid chain: DNA-directed RNA polymerase subunit omega (86 aa).

This sequence belongs to the RNA polymerase subunit omega family. The RNAP catalytic core consists of 2 alpha, 1 beta, 1 beta' and 1 omega subunit. When a sigma factor is associated with the core the holoenzyme is formed, which can initiate transcription.

It catalyses the reaction RNA(n) + a ribonucleoside 5'-triphosphate = RNA(n+1) + diphosphate. Its function is as follows. Promotes RNA polymerase assembly. Latches the N- and C-terminal regions of the beta' subunit thereby facilitating its interaction with the beta and alpha subunits. The chain is DNA-directed RNA polymerase subunit omega from Psychrobacter sp. (strain PRwf-1).